We begin with the raw amino-acid sequence, 281 residues long: CCAAT/enhancer-binding protein epsilon (281 aa).

Residues 1-30 (MSHGTYYECEPRAGQQPLEFSGARAGPGEL) form a disordered region. A Glycyl lysine isopeptide (Lys-Gly) (interchain with G-Cter in SUMO2) cross-link involves residue lysine 121. Serine 181 is subject to Phosphoserine. Positions 204-267 (SLEYRLRRER…DTLRNLFRQI (64 aa)) constitute a bZIP domain. The basic motif stretch occupies residues 208 to 228 (RLRRERNNIAVRKSRDKAKRR). A leucine-zipper region spans residues 230-237 (LETQQKVL).

This sequence belongs to the bZIP family. C/EBP subfamily. As to quaternary structure, binds DNA as a homodimer and as a heterodimer. Can form stable heterodimers with CEBPA, CEBPB and CEBPD. Interacts with GATA1 and SPI1. Interacts with SMARCD2. Post-translationally, phosphorylated.

The protein localises to the nucleus. In terms of biological role, transcriptional activator. C/EBP are DNA-binding proteins that recognize two different motifs: the CCAAT homology common to many promoters and the enhanced core homology common to many enhancers. Required for the promyelocyte-myelocyte transition in myeloid differentiation. The sequence is that of CCAAT/enhancer-binding protein epsilon (CEBPE) from Ovis aries (Sheep).